Reading from the N-terminus, the 176-residue chain is Large ribosomal subunit protein uL6 (176 aa).

The span at 151 to 170 (RPPEPYKGKGVRYADEQVRR) shows a compositional bias: basic and acidic residues. The tract at residues 151 to 176 (RPPEPYKGKGVRYADEQVRRKEAKKK) is disordered.

The protein belongs to the universal ribosomal protein uL6 family. As to quaternary structure, part of the 50S ribosomal subunit.

Functionally, this protein binds to the 23S rRNA, and is important in its secondary structure. It is located near the subunit interface in the base of the L7/L12 stalk, and near the tRNA binding site of the peptidyltransferase center. In Shewanella pealeana (strain ATCC 700345 / ANG-SQ1), this protein is Large ribosomal subunit protein uL6.